Reading from the N-terminus, the 97-residue chain is Putative septation protein SpoVG (97 aa).

This sequence belongs to the SpoVG family.

In terms of biological role, essential for sporulation. Interferes with or is a negative regulator of the pathway leading to asymmetric septation. The protein is Putative septation protein SpoVG of Bacillus cytotoxicus (strain DSM 22905 / CIP 110041 / 391-98 / NVH 391-98).